The chain runs to 212 residues: MDPLFQQTHKQVHEIQSCMGRLETADKQSVHIVENEIQASIDQIFSRLERLEILSSKEPPNKRQNARLRVDQLKYDVQHLQTALRNFQHRRHAREQQERQREELLSRTFTTNDSDTTIPMDESLQFNSSLQKVHNGMDDLILDGHNILDGLRTQRLTLKGTQKKILDIANMLGLSNTVMRLIEKRAFQDKYFMIGGMLLTCVVMFLVVQYLT.

The residue at position 1 (methionine 1) is an N-acetylmethionine. The Cytoplasmic portion of the chain corresponds to 1–190 (MDPLFQQTHK…LIEKRAFQDK (190 aa)). A coiled-coil region spans residues 61 to 107 (NKRQNARLRVDQLKYDVQHLQTALRNFQHRRHAREQQERQREELLSR). Residues 118–120 (IPM) carry the IxM motif; signal for cargo packaging into COPII-coated vesicles motif. The helical; Anchor for type IV membrane protein transmembrane segment at 191 to 211 (YFMIGGMLLTCVVMFLVVQYL) threads the bilayer. Residue threonine 212 is a topological domain, vesicular.

This sequence belongs to the GOSR2 family. As to quaternary structure, part of a unique SNARE complex composed of the Golgi SNAREs GOSR1, STX5 and YKT6. Interacts (via IxM motif) with SEC24C and SEC24D; mediates GOSR2 packaging into COPII-coated vesicles. Interacts with BET1.

Its subcellular location is the golgi apparatus. The protein localises to the cis-Golgi network membrane. It is found in the golgi apparatus membrane. The protein resides in the endoplasmic reticulum membrane. In terms of biological role, involved in transport of proteins from the cis/medial-Golgi to the trans-Golgi network. In Homo sapiens (Human), this protein is Golgi SNAP receptor complex member 2 (GOSR2).